Reading from the N-terminus, the 485-residue chain is Ribosomal protein uS12 methylthiotransferase RimO (485 aa).

An MTTase N-terminal domain is found at S37–P147. [4Fe-4S] cluster-binding residues include C46, C82, C111, C179, C183, and C186. Positions L165–A402 constitute a Radical SAM core domain. Positions K405–E471 constitute a TRAM domain.

Belongs to the methylthiotransferase family. RimO subfamily. [4Fe-4S] cluster serves as cofactor.

It localises to the cytoplasm. It catalyses the reaction L-aspartate(89)-[ribosomal protein uS12]-hydrogen + (sulfur carrier)-SH + AH2 + 2 S-adenosyl-L-methionine = 3-methylsulfanyl-L-aspartate(89)-[ribosomal protein uS12]-hydrogen + (sulfur carrier)-H + 5'-deoxyadenosine + L-methionine + A + S-adenosyl-L-homocysteine + 2 H(+). In terms of biological role, catalyzes the methylthiolation of an aspartic acid residue of ribosomal protein uS12. The polypeptide is Ribosomal protein uS12 methylthiotransferase RimO (Alteromonas mediterranea (strain DSM 17117 / CIP 110805 / LMG 28347 / Deep ecotype)).